Reading from the N-terminus, the 808-residue chain is uncharacterized protein (808 aa).

An EF-hand 1 domain is found at 6–41 (SRSEKVKRIFQQFDGNHDGGLNREEMAALVVAVNPR). TPR repeat units lie at residues 234 to 267 (FDGHMAIGRVLYEHQLFKEALVSFKRACELQPTD), 269 to 301 (RPHFKAGNCLYVLGKCKESKDEFLLALEAAESG), 310 to 343 (PQIYVNLGIALEGEGMVLSACEYYREAAILCPTH), 344 to 377 (FRALKLLGSALFGVGEYRAAVKALEEAIYLKPDY), 378 to 411 (ADAHCDLASSLHSMGEDERAIEVFQRAIDLKPGH), 412 to 445 (VDALYNLGGLYMDLGRFQRASEMYTRVLTVWPNH), and 447 to 479 (RAQLNKAVSLLGAGETEEAKRALKEALKLTNRV). Positions 600–635 (AIKAINEKILALLDDSGSGRVDMGMFYAVIAPLCGG) constitute an EF-hand 2 domain. Positions 773–794 (FKQEEYKFREYESEAEAMKAKC) form a coiled coil.

This is an uncharacterized protein from Arabidopsis thaliana (Mouse-ear cress).